Here is a 261-residue protein sequence, read N- to C-terminus: 4-hydroxy-tetrahydrodipicolinate reductase (261 aa).

NAD(+) contacts are provided by residues 11 to 16 (GFMGAM), 96 to 98 (GTT), and 122 to 125 (APNF). His-152 acts as the Proton donor/acceptor in catalysis. His-153 is a (S)-2,3,4,5-tetrahydrodipicolinate binding site. Catalysis depends on Lys-156, which acts as the Proton donor. 162-163 (GT) lines the (S)-2,3,4,5-tetrahydrodipicolinate pocket.

This sequence belongs to the DapB family.

It localises to the cytoplasm. It carries out the reaction (S)-2,3,4,5-tetrahydrodipicolinate + NAD(+) + H2O = (2S,4S)-4-hydroxy-2,3,4,5-tetrahydrodipicolinate + NADH + H(+). The enzyme catalyses (S)-2,3,4,5-tetrahydrodipicolinate + NADP(+) + H2O = (2S,4S)-4-hydroxy-2,3,4,5-tetrahydrodipicolinate + NADPH + H(+). The protein operates within amino-acid biosynthesis; L-lysine biosynthesis via DAP pathway; (S)-tetrahydrodipicolinate from L-aspartate: step 4/4. Functionally, catalyzes the conversion of 4-hydroxy-tetrahydrodipicolinate (HTPA) to tetrahydrodipicolinate. This Lactobacillus helveticus (strain DPC 4571) protein is 4-hydroxy-tetrahydrodipicolinate reductase.